Reading from the N-terminus, the 576-residue chain is Arginine--tRNA ligase (576 aa).

The short motif at proline 122–histidine 132 is the 'HIGH' region element.

This sequence belongs to the class-I aminoacyl-tRNA synthetase family. Monomer.

The protein localises to the cytoplasm. It carries out the reaction tRNA(Arg) + L-arginine + ATP = L-arginyl-tRNA(Arg) + AMP + diphosphate. This Erwinia tasmaniensis (strain DSM 17950 / CFBP 7177 / CIP 109463 / NCPPB 4357 / Et1/99) protein is Arginine--tRNA ligase.